Reading from the N-terminus, the 115-residue chain is MQRISSLIHLSLFWAGVMSAIELVPEHQTVPVSIGVPATLRCSMKGEAIGNYYINWYRKTQGNTMTFIYREKDIYGPGFKDNFQGDIDIAKNLAVLKILAPSERDEGSYYCACDT.

The N-terminal stretch at 1 to 19 (MQRISSLIHLSLFWAGVMS) is a signal peptide. The 91-residue stretch at 25–115 (PEHQTVPVSI…EGSYYCACDT (91 aa)) folds into the Ig-like domain. Cysteine 42 and cysteine 111 are oxidised to a cystine.

Gamma-delta TR is a heterodimer composed of a gamma and delta chain; disulfide-linked. The gamma-delta TR is associated with the transmembrane signaling CD3 coreceptor proteins following the stoichiometry: a single gamma-delta TR heterodimer associates with one CD3D-CD3E heterodimer, one CD3G-CD3E heterodimer and one CD247 homodimer forming a stable octameric structure. Upon activation, gamma-delta TR complex associates with FCER1G to initiate intracellular signaling.

Its subcellular location is the cell membrane. Its function is as follows. V region of the variable domain of T cell receptor (TR) delta chain that participates in the antigen recognition. Gamma-delta TRs recognize a variety of self and foreign non-peptide antigens frequently expressed at the epithelial boundaries between the host and external environment, including endogenous lipids presented by MH-like protein CD1D and phosphoantigens presented by butyrophilin-like molecule BTN3A1. Upon antigen recognition induces rapid, innate-like immune responses involved in pathogen clearance and tissue repair. Binding of gamma-delta TR complex to antigen triggers phosphorylation of immunoreceptor tyrosine-based activation motifs (ITAMs) in the CD3 chains by the LCK and FYN kinases, allowing the recruitment, phosphorylation, and activation of ZAP70 that facilitates phosphorylation of the scaffolding proteins LCP2 and LAT. This lead to the formation of a supramolecular signalosome that recruits the phospholipase PLCG1, resulting in calcium mobilization and ERK activation, ultimately leading to T cell expansion and differentiation into effector cells. Gamma-delta TRs are produced through somatic rearrangement of a limited repertoire of variable (V), diversity (D), and joining (J) genes. The potential diversity of gamma-delta TRs is conferred by the unique ability to rearrange (D) genes in tandem and to utilize all three reading frames. The combinatorial diversity is considerably increased by the sequence exonuclease trimming and random nucleotide (N) region additions which occur during the V-(D)-J rearrangements. This chain is T cell receptor delta variable 2, found in Homo sapiens (Human).